Here is a 281-residue protein sequence, read N- to C-terminus: MVSPIIDVKHLDYRYPQQATDQLTLHDISFTVMPGEWVAIVGHNGSGKSTLAKNLNGLLAPAAGTITVDGQVLSEETVWDIRRKIGMVFQNPDNQFVGATVADDVAFSLENQGVPRSEMLTRVQAALEQVNMQDFATREPARLSGGQKQRVALAGMIAARPQILILDEATSMLDPRGRQEVLTTIRDMKANSALTVLSITHDIDEAASANRVLVINDGEVKEEGTPAEIFQHGEALIKMGLDMPYAERLKAALKRQGVQVPAQYLTEKGMADWLWQLRSNK.

In terms of domain architecture, ABC transporter spans 6–242; the sequence is IDVKHLDYRY…GEALIKMGLD (237 aa). ATP is bound at residue 42–49; the sequence is GHNGSGKS.

It belongs to the ABC transporter superfamily. Energy-coupling factor EcfA family. In terms of assembly, forms a stable energy-coupling factor (ECF) transporter complex composed of 2 membrane-embedded substrate-binding proteins (S component), 2 ATP-binding proteins (A component) and 2 transmembrane proteins (T component).

Its subcellular location is the cell membrane. Its function is as follows. ATP-binding (A) component of a common energy-coupling factor (ECF) ABC-transporter complex. Unlike classic ABC transporters this ECF transporter provides the energy necessary to transport a number of different substrates. The sequence is that of Energy-coupling factor transporter ATP-binding protein EcfA1 from Lactiplantibacillus plantarum (strain ATCC BAA-793 / NCIMB 8826 / WCFS1) (Lactobacillus plantarum).